Reading from the N-terminus, the 511-residue chain is Cytochrome P450 monooxygenase roqR (511 aa).

An N-terminal signal peptide occupies residues 1–23 (MSGYVLLTVQLAAVLLLVTLWRA). N-linked (GlcNAc...) asparagine glycans are attached at residues Asn364, Asn373, and Asn383. Cys455 is a binding site for heme.

This sequence belongs to the cytochrome P450 family. Heme is required as a cofactor.

It functions in the pathway alkaloid biosynthesis. Functionally, cytochrome P450 monooxygenase; part of the gene cluster that mediates the biosynthesis of the mycotoxins roquefortine C and meleagrin. The first stage is catalyzed by the dipeptide synthase roqA which condenses histidine and tryptophan to produce histidyltryptophanyldiketopiperazine (HTD). HTD is then converted to roquefortine C through two possible pathways. In the first pathway, prenyltransferase roqD transforms HTD to the intermediate roquefortine D, which is in turn converted to roquefortine C by the cytochrome P450 monooxygenase roqR. In the second pathway, HTD is first converted to the intermediate dehydrohistidyltryptophanyldi-ketopiperazine (DHTD) by roqR which is then prenylated by roqD to form roquefortine C. Roquefortine C can be further transformed to meleagrin via three more reactions including oxydation to glandicolin A by roqM, which is further reduced to glandicoline B by roqO. Finally, glandicoline B is converted to meleagrin by the glandicoline B O-methyltransferase roqN. More studies identified further branching and additional metabolites produced by the roquefortine/meleagrin cluster, including roquefortine F, roquefortine L, roquefortine M, roquefortine N and neoxaline. The chain is Cytochrome P450 monooxygenase roqR from Penicillium rubens (strain ATCC 28089 / DSM 1075 / NRRL 1951 / Wisconsin 54-1255) (Penicillium chrysogenum).